A 500-amino-acid polypeptide reads, in one-letter code: NAD(P)H-quinone oxidoreductase chain 4, chloroplastic (500 aa).

14 consecutive transmembrane segments (helical) span residues 4–24 (FPWLTILVVLPIFAGSLIFFL), 37–57 (ISICLLEFLLMTYAFCYHFQL), 87–107 (LGSILLTGFITTLATLAAWPI), 113–130 (LFYFLMLAMYSGQIGLFS), 134–154 (LLLFFIMWELELIPVYLLLSM), 167–187 (FILYTAGGSIFFLIGVLGMGL), 211–231 (ILLYFGFLIAYAVKLPIIPLH), 242–262 (HYSTCMLLAGILLKMGAYGLI), 272–292 (AHYLFSPWLVIIGAIQIIYAA), 313–333 (MGFIIIGIGSITNIGLNGAIL), 334–354 (QILSHGFIGATLFFLAGTASD), 386–406 (LALPGMSGFVAELVVFFGLIT), 417–437 (LITFVMAIGMILTPIYLLSML), and 462–482 (LFILICIFLPVIGIGIYPDFV).

This sequence belongs to the complex I subunit 4 family.

The protein resides in the plastid. Its subcellular location is the chloroplast thylakoid membrane. The catalysed reaction is a plastoquinone + NADH + (n+1) H(+)(in) = a plastoquinol + NAD(+) + n H(+)(out). The enzyme catalyses a plastoquinone + NADPH + (n+1) H(+)(in) = a plastoquinol + NADP(+) + n H(+)(out). The polypeptide is NAD(P)H-quinone oxidoreductase chain 4, chloroplastic (ndhD) (Triticum aestivum (Wheat)).